Reading from the N-terminus, the 271-residue chain is Ribosomal RNA small subunit methyltransferase A (271 aa).

S-adenosyl-L-methionine-binding residues include H11, L13, G38, E59, D84, and N109.

It belongs to the class I-like SAM-binding methyltransferase superfamily. rRNA adenine N(6)-methyltransferase family. RsmA subfamily.

It localises to the cytoplasm. The enzyme catalyses adenosine(1518)/adenosine(1519) in 16S rRNA + 4 S-adenosyl-L-methionine = N(6)-dimethyladenosine(1518)/N(6)-dimethyladenosine(1519) in 16S rRNA + 4 S-adenosyl-L-homocysteine + 4 H(+). Specifically dimethylates two adjacent adenosines (A1518 and A1519) in the loop of a conserved hairpin near the 3'-end of 16S rRNA in the 30S particle. May play a critical role in biogenesis of 30S subunits. This Trichormus variabilis (strain ATCC 29413 / PCC 7937) (Anabaena variabilis) protein is Ribosomal RNA small subunit methyltransferase A.